Reading from the N-terminus, the 206-residue chain is Probable nicotinate-nucleotide adenylyltransferase (206 aa).

Belongs to the NadD family.

The enzyme catalyses nicotinate beta-D-ribonucleotide + ATP + H(+) = deamido-NAD(+) + diphosphate. It participates in cofactor biosynthesis; NAD(+) biosynthesis; deamido-NAD(+) from nicotinate D-ribonucleotide: step 1/1. Catalyzes the reversible adenylation of nicotinate mononucleotide (NaMN) to nicotinic acid adenine dinucleotide (NaAD). This is Probable nicotinate-nucleotide adenylyltransferase from Paenarthrobacter aurescens (strain TC1).